A 492-amino-acid chain; its full sequence is MDKMRTLQSLIVKLTLLYGALCMLQTENVKEINKQECIQNAVYNFNTTDSKYLDPKCVTIFMDQYRGLKNLLNYTEDQMNYIFSLERAMMRKHHINDKRHKRQAMTRPRQECRTLTDDARNNLFNTIVDLKAPSNGMSRYDTIAGLHRQAIANAHMGANFLGWHRLYLDMFEMALQETRSDVVLCYWDSTLDFLMPGTSQVNTVSFSAELFGNGRGVVINGPFRFWRLPGGRTLQRFIARPGSSLTRPGVVDLIATDPRINTNSQIVFRGQGFPDPDTGRPGHSWEDEHNNTHVWVGGVMQNVVSSPQDPVFWFHHTYVDYVWELFRQKIGPGAREQYPADASGPHAPDAPMIGFDMLQNRDGYSDEHSRMYAMHPRCSNNCGNSRFLLCPNNGPMADPNRRCVSRAVNSDMVPAAAISAPEAAGFSAMSPMGAFGPAAVGPSSVGRMASRSGAARVSLQATDTVAIRAAMSEPPLQLEGPSFTSSFDDPRI.

An N-terminal signal peptide occupies residues 1–22; the sequence is MDKMRTLQSLIVKLTLLYGALC. Cu cation is bound by residues histidine 147, histidine 155, histidine 164, histidine 289, histidine 293, and histidine 316. The interval 472-492 is disordered; it reads SEPPLQLEGPSFTSSFDDPRI. A compositionally biased stretch (polar residues) spans 482–492; sequence SFTSSFDDPRI.

Cu(2+) serves as cofactor. As to expression, prismatic layer of shell (at protein level). Expressed primarily in the mantle with highest level in the mantle edge and lower level in the mantle pallium.

Its subcellular location is the secreted. In Margaritifera margaritifera (Freshwater pearl mussel), this protein is Tyrosinase-like protein 1.